We begin with the raw amino-acid sequence, 556 residues long: Endoplasmic reticulum membrane protein 65 (556 aa).

At 1-87 (MQHKDTAVAK…IRIPMFLEKF (87 aa)) the chain is on the cytoplasmic side. S22 carries the post-translational modification Phosphoserine. Residues 88–108 (MLFALLTSLDCFLYYFTVLPI) form a helical membrane-spanning segment. Residues 109–151 (RLIKGYVKQFKSYRQHYRLQQRSGHKNKIPFRYRITSREYKER) lie on the Lumenal side of the membrane. Residues 152–172 (CMIFIIVISSILLSKLDTSKL) traverse the membrane as a helical segment. Residues 173–224 (YHRIKRQSTMKLYMLFSVLEMADKMLASLGQSLLTVMLSRKNSERILLHKCL) lie on the Cytoplasmic side of the membrane. A helical membrane pass occupies residues 225-245 (LVSMSLTYVTIHGYVLVYQAI). Residues 246–330 (SLNIAVNSYS…INFWSPRSTL (85 aa)) are Lumenal-facing. A glycan (N-linked (GlcNAc...) asparagine) is linked at N318. Residues 331 to 351 (SIVINILCGPMVSVVGSEVLV) traverse the membrane as a helical segment. The Cytoplasmic portion of the chain corresponds to 352–391 (DWAKHAYITKFNRIRPQIYDKFYYIIYKDYSTRTHKLEDR). A helical membrane pass occupies residues 392-412 (LGLPLPAFVVLFIVMVRPTLF). Residues 413 to 428 (KSSEPSYLPSLFRILF) are Lumenal-facing. The helical transmembrane segment at 429–449 (MGASVFLLALLAKFTLDLILI) threads the bilayer. Residues 450 to 556 (KWSKRIEQRF…RYKMVSKRIW (107 aa)) lie on the Cytoplasmic side of the membrane.

The protein belongs to the TAPT1 family. Interacts with SLP1.

It localises to the endoplasmic reticulum membrane. Its subcellular location is the mitochondrion. Its function is as follows. May be involved in membrane protein folding. This chain is Endoplasmic reticulum membrane protein 65, found in Saccharomyces cerevisiae (strain ATCC 204508 / S288c) (Baker's yeast).